The following is a 404-amino-acid chain: RING-H2 finger protein ATL11 (404 aa).

The first 36 residues, 1–36, serve as a signal peptide directing secretion; it reads MNPKGRTNLNRSIIGGHDHGSILQLLLFLLLLSSHG. Residues 64–84 form a helical membrane-spanning segment; the sequence is AILMIVLVSVFFFLGFFSVYI. An RING-type; atypical zinc finger spans residues 144-186; it reads CSVCLNEFEDDETLRLIPKCCHVFHPGCIDAWLRSHTTCPLCR. 2 disordered regions span residues 339–361 and 385–404; these read PYRT…VRAS and VGEN…SNTV.

This sequence belongs to the RING-type zinc finger family. ATL subfamily.

It localises to the membrane. It catalyses the reaction S-ubiquitinyl-[E2 ubiquitin-conjugating enzyme]-L-cysteine + [acceptor protein]-L-lysine = [E2 ubiquitin-conjugating enzyme]-L-cysteine + N(6)-ubiquitinyl-[acceptor protein]-L-lysine.. It functions in the pathway protein modification; protein ubiquitination. The chain is RING-H2 finger protein ATL11 (ATL11) from Arabidopsis thaliana (Mouse-ear cress).